Reading from the N-terminus, the 719-residue chain is Delta-1-pyrroline-5-carboxylate synthase (719 aa).

A glutamate 5-kinase region spans residues 1–293 (MDATRAFVKD…WVQVKETGVR (293 aa)). Substrate contacts are provided by S57, D154, and N173. ATP contacts are provided by residues 193–194 (SD) and 233–239 (RGGMTAK). The segment at 294–719 (DMAVAARESS…KDLPLVAQNS (426 aa)) is gamma-glutamyl phosphate reductase.

This sequence in the N-terminal section; belongs to the glutamate 5-kinase family. It in the C-terminal section; belongs to the gamma-glutamyl phosphate reductase family. In terms of tissue distribution, expressed at high levels in leaves and is inducible in roots subjected to salt stress.

It catalyses the reaction L-glutamate + ATP = L-glutamyl 5-phosphate + ADP. The enzyme catalyses L-glutamate 5-semialdehyde + phosphate + NADP(+) = L-glutamyl 5-phosphate + NADPH + H(+). The protein operates within amino-acid biosynthesis; L-proline biosynthesis; L-glutamate 5-semialdehyde from L-glutamate: step 1/2. Its pathway is amino-acid biosynthesis; L-proline biosynthesis; L-glutamate 5-semialdehyde from L-glutamate: step 2/2. With respect to regulation, feedback regulated by proline. P5CS plays a key role in proline biosynthesis, leading to osmoregulation in plants. In Mesembryanthemum crystallinum (Common ice plant), this protein is Delta-1-pyrroline-5-carboxylate synthase (P5CS).